We begin with the raw amino-acid sequence, 1404 residues long: DNA-directed RNA polymerase subunit beta' (1404 aa).

4 residues coordinate Zn(2+): C70, C72, C85, and C88. Positions 460, 462, and 464 each coordinate Mg(2+). Residues C814, C889, C896, and C899 each coordinate Zn(2+). The segment at 1377-1404 is disordered; the sequence is DSEMETLSGKPAAAEPVAAVADAGADEE. Residues 1387–1404 are compositionally biased toward low complexity; it reads PAAAEPVAAVADAGADEE.

This sequence belongs to the RNA polymerase beta' chain family. The RNAP catalytic core consists of 2 alpha, 1 beta, 1 beta' and 1 omega subunit. When a sigma factor is associated with the core the holoenzyme is formed, which can initiate transcription. It depends on Mg(2+) as a cofactor. Zn(2+) serves as cofactor.

It catalyses the reaction RNA(n) + a ribonucleoside 5'-triphosphate = RNA(n+1) + diphosphate. DNA-dependent RNA polymerase catalyzes the transcription of DNA into RNA using the four ribonucleoside triphosphates as substrates. This is DNA-directed RNA polymerase subunit beta' from Xanthomonas euvesicatoria pv. vesicatoria (strain 85-10) (Xanthomonas campestris pv. vesicatoria).